The sequence spans 469 residues: tRNA-2-methylthio-N(6)-dimethylallyladenosine synthase (469 aa).

Residues 22–142 (RKVFIKTYGC…LPEALRRAKE (121 aa)) form the MTTase N-terminal domain. The [4Fe-4S] cluster site is built by Cys-31, Cys-67, Cys-105, Cys-183, Cys-187, and Cys-190. The region spanning 169 to 401 (RARGVTAFLT…QALLLKQQQE (233 aa)) is the Radical SAM core domain. The 63-residue stretch at 404-466 (ESCIGKEIDL…TNSLFAERAE (63 aa)) folds into the TRAM domain.

Belongs to the methylthiotransferase family. MiaB subfamily. In terms of assembly, monomer. [4Fe-4S] cluster serves as cofactor.

It is found in the cytoplasm. It catalyses the reaction N(6)-dimethylallyladenosine(37) in tRNA + (sulfur carrier)-SH + AH2 + 2 S-adenosyl-L-methionine = 2-methylsulfanyl-N(6)-dimethylallyladenosine(37) in tRNA + (sulfur carrier)-H + 5'-deoxyadenosine + L-methionine + A + S-adenosyl-L-homocysteine + 2 H(+). Its function is as follows. Catalyzes the methylthiolation of N6-(dimethylallyl)adenosine (i(6)A), leading to the formation of 2-methylthio-N6-(dimethylallyl)adenosine (ms(2)i(6)A) at position 37 in tRNAs that read codons beginning with uridine. The sequence is that of tRNA-2-methylthio-N(6)-dimethylallyladenosine synthase from Rhizobium etli (strain ATCC 51251 / DSM 11541 / JCM 21823 / NBRC 15573 / CFN 42).